The primary structure comprises 262 residues: 1-(5-phosphoribosyl)-5-[(5-phosphoribosylamino)methylideneamino] imidazole-4-carboxamide isomerase (262 aa).

D8 acts as the Proton acceptor in catalysis. Catalysis depends on D129, which acts as the Proton donor. The segment at 243-262 (KDNVGQEDHSLPRCEPGPRG) is disordered.

The protein belongs to the HisA/HisF family.

It localises to the cytoplasm. The catalysed reaction is 1-(5-phospho-beta-D-ribosyl)-5-[(5-phospho-beta-D-ribosylamino)methylideneamino]imidazole-4-carboxamide = 5-[(5-phospho-1-deoxy-D-ribulos-1-ylimino)methylamino]-1-(5-phospho-beta-D-ribosyl)imidazole-4-carboxamide. Its pathway is amino-acid biosynthesis; L-histidine biosynthesis; L-histidine from 5-phospho-alpha-D-ribose 1-diphosphate: step 4/9. This is 1-(5-phosphoribosyl)-5-[(5-phosphoribosylamino)methylideneamino] imidazole-4-carboxamide isomerase from Desulforudis audaxviator (strain MP104C).